The sequence spans 443 residues: UDP-N-acetylmuramate--L-alanine ligase (443 aa).

110–116 is a binding site for ATP; that stretch reads GAHGKTS.

Belongs to the MurCDEF family.

Its subcellular location is the cytoplasm. It catalyses the reaction UDP-N-acetyl-alpha-D-muramate + L-alanine + ATP = UDP-N-acetyl-alpha-D-muramoyl-L-alanine + ADP + phosphate + H(+). It participates in cell wall biogenesis; peptidoglycan biosynthesis. Its function is as follows. Cell wall formation. The sequence is that of UDP-N-acetylmuramate--L-alanine ligase from Streptococcus equi subsp. equi (strain 4047).